We begin with the raw amino-acid sequence, 304 residues long: Oxygen-dependent coproporphyrinogen-III oxidase (304 aa).

S94 is a binding site for substrate. A divalent metal cation-binding residues include H98 and H108. H108 serves as the catalytic Proton donor. 110–112 (NVR) serves as a coordination point for substrate. A divalent metal cation is bound by residues H147 and H177. Residues 242 to 277 (YVEFNLVYDRGTLFGLQTGGRTESILMSMPPLVRWE) are important for dimerization. 260–262 (GGR) provides a ligand contact to substrate.

This sequence belongs to the aerobic coproporphyrinogen-III oxidase family. Homodimer. A divalent metal cation serves as cofactor.

It localises to the cytoplasm. It catalyses the reaction coproporphyrinogen III + O2 + 2 H(+) = protoporphyrinogen IX + 2 CO2 + 2 H2O. It functions in the pathway porphyrin-containing compound metabolism; protoporphyrin-IX biosynthesis; protoporphyrinogen-IX from coproporphyrinogen-III (O2 route): step 1/1. Involved in the heme biosynthesis. Catalyzes the aerobic oxidative decarboxylation of propionate groups of rings A and B of coproporphyrinogen-III to yield the vinyl groups in protoporphyrinogen-IX. The protein is Oxygen-dependent coproporphyrinogen-III oxidase of Shewanella piezotolerans (strain WP3 / JCM 13877).